A 576-amino-acid polypeptide reads, in one-letter code: Septation ring formation regulator EzrA (576 aa).

Residues 1–7 (MSSTVII) are Extracellular-facing. A helical transmembrane segment spans residues 8-26 (LIVVLLVILVAFYAFAILM). Residues 27–576 (RKKTEDRILA…FKNKPTPDYL (550 aa)) are Cytoplasmic-facing. Coiled coils occupy residues 105-134 (RARESVADSEAQIEMMEGDVEGIRQGVAQL), 254-305 (ENVN…FERE), and 356-402 (GYQE…IEKN).

It belongs to the EzrA family.

It is found in the cell membrane. Functionally, negative regulator of FtsZ ring formation; modulates the frequency and position of FtsZ ring formation. Inhibits FtsZ ring formation at polar sites. Interacts either with FtsZ or with one of its binding partners to promote depolymerization. This Lactococcus lactis subsp. cremoris (strain MG1363) protein is Septation ring formation regulator EzrA.